The chain runs to 283 residues: Acetylglutamate kinase (283 aa).

Substrate is bound by residues 64–65 (GG), R86, and N178.

Belongs to the acetylglutamate kinase family. ArgB subfamily.

The protein resides in the cytoplasm. The enzyme catalyses N-acetyl-L-glutamate + ATP = N-acetyl-L-glutamyl 5-phosphate + ADP. It participates in amino-acid biosynthesis; L-arginine biosynthesis; N(2)-acetyl-L-ornithine from L-glutamate: step 2/4. Its function is as follows. Catalyzes the ATP-dependent phosphorylation of N-acetyl-L-glutamate. In Lactococcus lactis subsp. cremoris (strain SK11), this protein is Acetylglutamate kinase.